Consider the following 745-residue polypeptide: Copper-transporting ATPase (745 aa).

The 67-residue stretch at 1–67 (MKESFYIEGM…LIEKLGYSPK (67 aa)) folds into the HMA domain. Over 1–83 (MKESFYIEGM…KKEFFSPNVK (83 aa)) the chain is Cytoplasmic. Positions 12 and 15 each coordinate Cu cation. The chain crosses the membrane as a helical span at residues 84-104 (LALAVIFTLFVVYLSMGAMLS). At 105–124 (PSLLPESLLAINNHSNFLNA) the chain is on the extracellular side. Residues 125–144 (CLQLIGALIVMHLGRDFYIQ) form a helical membrane-spanning segment. Topologically, residues 145–151 (GFKALWH) are cytoplasmic. Residues 152-172 (RQPNMSSLIAIGTSAALISSL) traverse the membrane as a helical segment. At 173 to 194 (WQLYLVYTNHYTDQWSYGHYYF) the chain is on the extracellular side. A helical membrane pass occupies residues 195 to 215 (ESVCVILMFVMVGKRIENVSK). Residues 216–343 (DKALDAMQAL…KAEISRLADK (128 aa)) are Cytoplasmic-facing. A helical transmembrane segment spans residues 344 to 366 (VSSVFVPSVIAIAILAFVVWLII). Topologically, residues 367–379 (APKPDFWWNFGIA) are extracellular. A helical membrane pass occupies residues 380–397 (LEVFVSVLVISCPCALGL). Residues 398–685 (ATPMSILVAN…KLSQATIKNI (288 aa)) lie on the Cytoplasmic side of the membrane. Residue D435 is the 4-aspartylphosphate intermediate of the active site. Mg(2+) contacts are provided by D631 and D635. A helical transmembrane segment spans residues 686–705 (KENLFWAFCYNSVFIPLACG). The Extracellular portion of the chain corresponds to 706 to 716 (VLYKANIMLSP). The helical transmembrane segment at 717 to 735 (AIAGLAMSLSSVSVVLNSQ) threads the bilayer. The Cytoplasmic portion of the chain corresponds to 736–745 (RLRNFKIKDH).

The protein belongs to the cation transport ATPase (P-type) (TC 3.A.3) family. Type IB subfamily.

Its subcellular location is the cell membrane. It catalyses the reaction Cu(2+)(in) + ATP + H2O = Cu(2+)(out) + ADP + phosphate + H(+). Functionally, probably involved in copper export. This is Copper-transporting ATPase (copA) from Helicobacter pylori (Campylobacter pylori).